Consider the following 21-residue polypeptide: Serine protease inhibitor 3 (21 aa).

It belongs to the protease inhibitor I3 (leguminous Kunitz-type inhibitor) family. In terms of tissue distribution, tubers.

It localises to the vacuole. Its function is as follows. Inhibits trypsin and chymotrypsin (serine proteases). Does not inhibit elastase, subtilisin, cathepsin L nor papain (serine and cysteine proteases). Protects the plant by inhibiting proteases of invading organisms, decreasing both hyphal growth and zoospores germination of Phytophthora infestans. This is Serine protease inhibitor 3 from Solanum tuberosum (Potato).